The following is a 223-amino-acid chain: Trichome differentiation protein GL1 (223 aa).

2 consecutive HTH myb-type domains span residues asparagine 11–leucine 63 and serine 64–leucine 118. 2 DNA-binding regions (H-T-H motif) span residues tryptophan 39–leucine 63 and tryptophan 91–leucine 114.

The protein localises to the nucleus. Its function is as follows. Regulates the production of a signal that induces hair (trichome) precursor cells on leaf primordia to differentiate. The sequence is that of Trichome differentiation protein GL1 (GL1) from Arabidopsis lyrata (Lyre-leaved rock-cress).